The following is a 474-amino-acid chain: 3-isopropylmalate dehydratase large subunit (474 aa).

Cys-353, Cys-414, and Cys-417 together coordinate [4Fe-4S] cluster.

This sequence belongs to the aconitase/IPM isomerase family. LeuC type 1 subfamily. As to quaternary structure, heterodimer of LeuC and LeuD. [4Fe-4S] cluster is required as a cofactor.

It catalyses the reaction (2R,3S)-3-isopropylmalate = (2S)-2-isopropylmalate. It functions in the pathway amino-acid biosynthesis; L-leucine biosynthesis; L-leucine from 3-methyl-2-oxobutanoate: step 2/4. In terms of biological role, catalyzes the isomerization between 2-isopropylmalate and 3-isopropylmalate, via the formation of 2-isopropylmaleate. The chain is 3-isopropylmalate dehydratase large subunit from Teredinibacter turnerae (strain ATCC 39867 / T7901).